The following is a 124-amino-acid chain: uncharacterized protein (124 aa).

The protein resides in the cytoplasm. The protein localises to the nucleus. This is an uncharacterized protein from Schizosaccharomyces pombe (strain 972 / ATCC 24843) (Fission yeast).